The following is a 697-amino-acid chain: Potassium-transporting ATPase ATP-binding subunit (697 aa).

Helical transmembrane passes span Pro55–Ser75, Ser79–Ala99, Leu245–Phe265, and Val271–Ile291. Asp324 functions as the 4-aspartylphosphate intermediate in the catalytic mechanism. Residues Asp361, Glu365, Phe393–Ser400, and Lys412 each bind ATP. The Mg(2+) site is built by Asp535 and Asp539. 3 helical membrane-spanning segments follow: residues Phe605–Met625, Ala633–Met653, and Gly677–Ile697.

It belongs to the cation transport ATPase (P-type) (TC 3.A.3) family. Type IA subfamily. In terms of assembly, the system is composed of three essential subunits: KdpA, KdpB and KdpC.

The protein resides in the cell membrane. The catalysed reaction is K(+)(out) + ATP + H2O = K(+)(in) + ADP + phosphate + H(+). Its function is as follows. Part of the high-affinity ATP-driven potassium transport (or Kdp) system, which catalyzes the hydrolysis of ATP coupled with the electrogenic transport of potassium into the cytoplasm. This subunit is responsible for energy coupling to the transport system and for the release of the potassium ions to the cytoplasm. In Bacillus cereus (strain AH820), this protein is Potassium-transporting ATPase ATP-binding subunit.